The chain runs to 461 residues: Cysteine--tRNA ligase (461 aa).

Cys28 is a Zn(2+) binding site. The 'HIGH' region signature appears at 30–40 (ITIYDLCHIGH). Zn(2+) contacts are provided by Cys209, His234, and Glu238. Residues 266–270 (KMSKS) carry the 'KMSKS' region motif. ATP is bound at residue Lys269.

Belongs to the class-I aminoacyl-tRNA synthetase family. As to quaternary structure, monomer. The cofactor is Zn(2+).

The protein resides in the cytoplasm. The catalysed reaction is tRNA(Cys) + L-cysteine + ATP = L-cysteinyl-tRNA(Cys) + AMP + diphosphate. This chain is Cysteine--tRNA ligase, found in Yersinia pseudotuberculosis serotype O:3 (strain YPIII).